Here is a 670-residue protein sequence, read N- to C-terminus: MAAPCVRLGSVRCTGTLLRYFCGSARHRAAAASHEEIDIPRRKSWDKTAVLQALAYTVSHDPTAAHYMFQDEPFLAPKTSSEFRLYSLSKESGRNAAKYIIGTYPNLFQNDVAEPHIPCLMPENLQPQVEGVSEEALKERIQLRRVKESVDLFDQLLQGGTAPSLETTNKLLDLISFYGDREPVRDIQTSEQEQQEVQDQQETEDPKKRPRQYRKASEILGSWRENNNAERIFNLMPERNAHSFCTLIQGMAKFGSSSKAFNIYTDLMNNRLTADVQTFNALILAAPDIKEKYNEKWDLIVELLKHMVQQNVRPNLLTFNSVLKSLRKCGPMAKGLALQTINEMKALNIEPSLATYNHLLGVFYKGALSPRGQTEILSEVLDEIEGRSFTLRDPDDVYFFTNAMRVCLDLKDIELAYRLHTLQQTADNRGLMGDFYLQSTYYGRFFNLLCMMESIDIILKWYRELIPSLYYPNSRGMLDLLQALDMDNRLDLIPQIWKDIKQIGHSNKVELVEEVLNLMARDIQPPELQAAFGDTALDIKSLYEVKDRVRVALEWSAGSLGNVSALLARAGKTVEAWKMLQLFKKSHRVPSTEVLDEFLSRAKVDANTNLAISLVQLAVGFCLPNTAKLAQRVMEEFTVSEEQRLTLEDLQKSHSSSSSSSSSSSDSDRE.

The transit peptide at Met1–Cys13 directs the protein to the mitochondrion. 11 PPR repeats span residues Val129–Pro163, Ser164–Asp199, Arg209–Arg239, Asn240–Ala274, Asp275–Pro314, Asn315–Pro351, Ser352–Arg392, Asp396–Gly430, Gln438–Pro472, Asn473–Asn507, and Ser556–Pro590. A disordered region spans residues Ile187–Tyr213. The segment covering Glu193–Thr203 has biased composition (acidic residues). A disordered region spans residues Glu648–Glu670. Residues Ser653 to Glu670 are compositionally biased toward low complexity.

The protein belongs to the mitochondrion-specific ribosomal protein mS39 family.

It localises to the mitochondrion. Its function is as follows. Mitochondrial protein that may have a role in mitochondrial translation. The polypeptide is Small ribosomal subunit protein mS39 (ptcd3) (Xenopus tropicalis (Western clawed frog)).